Here is a 564-residue protein sequence, read N- to C-terminus: Arginine--tRNA ligase (564 aa).

The 'HIGH' region motif lies at 122-132; the sequence is PNIAKPFSIGH.

This sequence belongs to the class-I aminoacyl-tRNA synthetase family. In terms of assembly, monomer.

It is found in the cytoplasm. It carries out the reaction tRNA(Arg) + L-arginine + ATP = L-arginyl-tRNA(Arg) + AMP + diphosphate. This chain is Arginine--tRNA ligase, found in Lactococcus lactis subsp. lactis (strain IL1403) (Streptococcus lactis).